A 411-amino-acid chain; its full sequence is MLSFSRARSQGRNTRPLGGGMEYLEPKRKSNVMGKIILVVSLTALCIFMLKHAPSFTSPTAFSRSEEGVTHVLVTGGAGYIGSHAALRLLKDSYRVTIVDNLSRGNLGAVKVLQGLFPEPGRLQFIYADLGDAKAVDKIFSENAFDAVMHFAAVAYVGESTLDPLKYYHNITSNTLVVLEAVARHKVKKLIYSSTCATYGEPDKMPIVEVTPQVPINPYGKAKKMAEDMILDFSKNSDMAVMILRYFNVIGSDPEGRLGEAPKPELREHGRISGACFDAARGVIPGLQVKGTDYKTGDGTCVRDYIDVTDLVDAHVKALEKAKPRNVGIYNVGTGKGRSVKEFVEACKKATGVDIKVDFLPRRPGDYAEVYSDPAKILRDLNWSARYTNLQESLEVAWKWQKTHPHGYASS.

The segment covering 1 to 13 (MLSFSRARSQGRN) has biased composition (polar residues). The disordered stretch occupies residues 1–22 (MLSFSRARSQGRNTRPLGGGME). The Cytoplasmic portion of the chain corresponds to 1–31 (MLSFSRARSQGRNTRPLGGGMEYLEPKRKSN). A helical; Signal-anchor for type II membrane protein membrane pass occupies residues 32–50 (VMGKIILVVSLTALCIFML). Topologically, residues 51–411 (KHAPSFTSPT…KTHPHGYASS (361 aa)) are lumenal. An NAD(+)-binding site is contributed by 71-102 (HVLVTGGAGYIGSHAALRLLKDSYRVTIVDNL). Catalysis depends on tyrosine 219, which acts as the Proton acceptor.

It belongs to the NAD(P)-dependent epimerase/dehydratase family. NAD(+) is required as a cofactor.

The protein resides in the golgi apparatus. It localises to the golgi stack membrane. The enzyme catalyses UDP-beta-L-arabinopyranose = UDP-alpha-D-xylose. It participates in nucleotide-sugar biosynthesis; UDP-L-arabinose biosynthesis; UDP-L-arabinose from UDP-alpha-D-xylose: step 1/1. The protein operates within cell wall biogenesis; cell wall polysaccharide biosynthesis. The sequence is that of Probable UDP-arabinose 4-epimerase 3 from Arabidopsis thaliana (Mouse-ear cress).